A 361-amino-acid chain; its full sequence is Phosphate acyltransferase (361 aa).

The tract at residues 342 to 361 is disordered; the sequence is ADGAAAEQGPTPRRTAPRQT.

Belongs to the PlsX family. In terms of assembly, homodimer. Probably interacts with PlsY.

Its subcellular location is the cytoplasm. The catalysed reaction is a fatty acyl-[ACP] + phosphate = an acyl phosphate + holo-[ACP]. Its pathway is lipid metabolism; phospholipid metabolism. Catalyzes the reversible formation of acyl-phosphate (acyl-PO(4)) from acyl-[acyl-carrier-protein] (acyl-ACP). This enzyme utilizes acyl-ACP as fatty acyl donor, but not acyl-CoA. The polypeptide is Phosphate acyltransferase (Anaeromyxobacter sp. (strain K)).